A 241-amino-acid polypeptide reads, in one-letter code: 3-deoxy-D-manno-octulosonic acid kinase (241 aa).

Aspartate 171 is an active-site residue.

This sequence belongs to the protein kinase superfamily. KdkA/RfaP family.

The protein resides in the cell inner membrane. It catalyses the reaction an alpha-Kdo-(2-&gt;6)-lipid IVA + ATP = a 4-O-phospho-alpha-Kdo-(2-&gt;6)-lipid IVA + ADP + H(+). The protein operates within bacterial outer membrane biogenesis; LPS core biosynthesis. In terms of biological role, catalyzes the ATP-dependent phosphorylation of the 3-deoxy-D-manno-octulosonic acid (Kdo) residue in Kdo-lipid IV(A) at the 4-OH position. In Haemophilus influenzae (strain PittEE), this protein is 3-deoxy-D-manno-octulosonic acid kinase.